We begin with the raw amino-acid sequence, 914 residues long: Serine/threonine-protein kinase MST20 (914 aa).

Over residues 1–12 (MDGHSNFTQPSD) the composition is skewed to polar residues. Disordered regions lie at residues 1–140 (MDGH…QLQN), 156–184 (NQYS…LTFN), and 251–286 (AMSE…VLRK). Low complexity-rich tracts occupy residues 13–26 (TSHA…SSSS), 63–72 (RSSTSLRRAP), and 79–97 (TPTS…PSSS). Over residues 122–136 (ARDRDSDPARNDHGH) the composition is skewed to basic and acidic residues. Positions 156-166 (NQYSAASHRRS) are enriched in basic residues. A compositionally biased stretch (polar residues) spans 175–184 (PQSSNSLTFN). The segment covering 271 to 280 (RYSDETKEPK) has biased composition (basic and acidic residues). Positions 306–319 (ISAPENPVHVTHVG) constitute a CRIB domain. Residues 408 to 615 (SPMISPPASP…RHRSRQSNGL (208 aa)) are disordered. Low complexity-rich tracts occupy residues 516–548 (AYPA…QAQA) and 562–576 (QPQA…SQHQ). Polar residues predominate over residues 577–586 (YSRPTDANGA). Positions 587 to 596 (QQTQRPQQPQ) are enriched in low complexity. The Protein kinase domain occupies 634–885 (YRSFTKIGQG…AHDLLRHEFM (252 aa)). ATP is bound by residues 640–648 (IGQGASGGV) and lysine 663. Residue aspartate 753 is the Proton acceptor of the active site.

It belongs to the protein kinase superfamily. STE Ser/Thr protein kinase family. STE20 subfamily.

The protein resides in the cytoplasm. The protein localises to the nucleus. The enzyme catalyses L-seryl-[protein] + ATP = O-phospho-L-seryl-[protein] + ADP + H(+). It catalyses the reaction L-threonyl-[protein] + ATP = O-phospho-L-threonyl-[protein] + ADP + H(+). In terms of biological role, MAP4K component of the MAPK pathway required for the mating pheromone response and the regulation of cell polarity and cell cycle. Phosphorylates histone H2B to form H2BS10ph. Is involved in conidiation, aerial hyphal growth and infection-related morphogenesis. This is Serine/threonine-protein kinase MST20 (MST20) from Pyricularia oryzae (strain 70-15 / ATCC MYA-4617 / FGSC 8958) (Rice blast fungus).